The following is an 832-amino-acid chain: Cation/H(+) antiporter 21 (832 aa).

The next 12 helical transmembrane spans lie at 33–55 (ISAA…RILY), 61–81 (LCLP…PTVL), 99–119 (LLET…GLGL), 132–152 (VIIA…LYYL), 161–181 (ILAG…PDLA), 200–220 (CAAV…MAIF), 236–256 (STIA…AWIF), 278–298 (IICS…AFLF), 319–339 (FLSG…ADIG), 352–372 (VVTS…SIFL), 379–399 (GLAI…ILNA), and 413–433 (HLTL…AIAY). The segment covering 792–802 (RQTAENNNQEP) has biased composition (polar residues). The tract at residues 792–832 (RQTAENNNQEPVQGKAKTDHEATPFMEDEDDEVEHQYSMRR) is disordered.

The protein belongs to the monovalent cation:proton antiporter 2 (CPA2) transporter (TC 2.A.37) family. CHX (TC 2.A.37.4) subfamily. In terms of tissue distribution, specifically expressed in root endodermal cells. Expressed in seedlings, roots, leaves, flowers, flower buds and pollen.

The protein localises to the cell membrane. Functionally, operates as a Na(+)/H(+) antiporter that plays a role in regulation of xylem Na(+) concentration and, consequently, Na(+) accumulation in the leaf. Required for pollen tube guidance, but not for normal pollen development. May also be involved in the development or function of the female gametophyte. The chain is Cation/H(+) antiporter 21 (CHX21) from Arabidopsis thaliana (Mouse-ear cress).